Reading from the N-terminus, the 224-residue chain is dTDP-fucosamine acetyltransferase (224 aa).

The N-acetyltransferase domain occupies 94-224 (PALRQLASAA…VESTAYWLYR (131 aa)). Acetyl-CoA is bound by residues 168–174 (LAGRGAG), Asn201, and Arg207. Tyr208 acts as the Proton donor in catalysis.

Belongs to the WecD family. As to quaternary structure, homodimer.

It carries out the reaction dTDP-4-amino-4,6-dideoxy-alpha-D-galactose + acetyl-CoA = dTDP-4-acetamido-4,6-dideoxy-alpha-D-galactose + CoA + H(+). Its pathway is bacterial outer membrane biogenesis; enterobacterial common antigen biosynthesis. Functionally, catalyzes the acetylation of dTDP-fucosamine (dTDP-4-amino-4,6-dideoxy-D-galactose) to dTDP-Fuc4NAc, which is utilized in the biosynthesis of the enterobacterial common antigen (ECA). The protein is dTDP-fucosamine acetyltransferase of Escherichia coli O6:H1 (strain CFT073 / ATCC 700928 / UPEC).